Reading from the N-terminus, the 203-residue chain is Probable GTP-binding protein EngB (203 aa).

An EngB-type G domain is found at 24–199 (DGSEVAFAGR…HTVIETWLGL (176 aa)). GTP is bound by residues 32 to 39 (GRSNAGKS), 59 to 63 (GRTQQ), 77 to 80 (DLPG), 144 to 147 (TKAD), and 178 to 180 (FSS). Residues serine 39 and threonine 61 each contribute to the Mg(2+) site.

The protein belongs to the TRAFAC class TrmE-Era-EngA-EngB-Septin-like GTPase superfamily. EngB GTPase family. The cofactor is Mg(2+).

In terms of biological role, necessary for normal cell division and for the maintenance of normal septation. The polypeptide is Probable GTP-binding protein EngB (Xylella fastidiosa (strain 9a5c)).